The following is a 424-amino-acid chain: UPF0597 protein Sbal_3070 (424 aa).

Belongs to the UPF0597 family.

This is UPF0597 protein Sbal_3070 from Shewanella baltica (strain OS155 / ATCC BAA-1091).